We begin with the raw amino-acid sequence, 211 residues long: Endonuclease III (211 aa).

Positions 108–127 constitute a HhH domain; that stretch reads REALEALAGVGRKTANVVLN. Residues cysteine 187, cysteine 194, cysteine 197, and cysteine 203 each coordinate [4Fe-4S] cluster.

This sequence belongs to the Nth/MutY family. Requires [4Fe-4S] cluster as cofactor.

It catalyses the reaction 2'-deoxyribonucleotide-(2'-deoxyribose 5'-phosphate)-2'-deoxyribonucleotide-DNA = a 3'-end 2'-deoxyribonucleotide-(2,3-dehydro-2,3-deoxyribose 5'-phosphate)-DNA + a 5'-end 5'-phospho-2'-deoxyribonucleoside-DNA + H(+). Its function is as follows. DNA repair enzyme that has both DNA N-glycosylase activity and AP-lyase activity. The DNA N-glycosylase activity releases various damaged pyrimidines from DNA by cleaving the N-glycosidic bond, leaving an AP (apurinic/apyrimidinic) site. The AP-lyase activity cleaves the phosphodiester bond 3' to the AP site by a beta-elimination, leaving a 3'-terminal unsaturated sugar and a product with a terminal 5'-phosphate. This chain is Endonuclease III, found in Haemophilus influenzae (strain ATCC 51907 / DSM 11121 / KW20 / Rd).